The sequence spans 1172 residues: Ras guanine nucleotide exchange factor W (1172 aa).

Composition is skewed to low complexity over residues Pro-34–Leu-70 and Asn-78–Ser-87. Disordered regions lie at residues Pro-34–Thr-100, Lys-138–Gln-162, and Phe-186–Asp-246. The span at Gln-194 to Ser-241 shows a compositional bias: low complexity. 6 helical membrane passes run Ile-286–Gly-306, Ile-320–Phe-340, Phe-347–Ile-367, Val-378–Ile-400, Leu-432–Val-452, and Ile-545–Ile-565. Residues Leu-666–Tyr-702 adopt a coiled-coil conformation. The N-terminal Ras-GEF domain maps to Asp-765–Met-903. Positions Asp-938 to Arg-1170 constitute a Ras-GEF domain.

The protein resides in the membrane. Functionally, promotes the exchange of Ras-bound GDP by GTP. This chain is Ras guanine nucleotide exchange factor W (gefW), found in Dictyostelium discoideum (Social amoeba).